We begin with the raw amino-acid sequence, 158 residues long: Small ribosomal subunit protein uS19 (158 aa).

It belongs to the universal ribosomal protein uS19 family.

Protein S19 forms a complex with S13 that binds strongly to the 16S ribosomal RNA. The protein is Small ribosomal subunit protein uS19 of Pyrobaculum neutrophilum (strain DSM 2338 / JCM 9278 / NBRC 100436 / V24Sta) (Thermoproteus neutrophilus).